A 367-amino-acid chain; its full sequence is Zinc transport system membrane protein TroD (367 aa).

The next 9 membrane-spanning stretches (helical) occupy residues 5-25 (VVLIAVVVSVACALCGVFLVL), 28-48 (ISLMSDAISHSVILGIVLGYF), 56-76 (FVPFVGAVIAGICSVICAELL), 87-107 (AVGLVFPAMFGLGVILVSLYA), 140-160 (SLVQMGSVLCGLLLLLALFFK), 170-190 (VLATSLGFSPTLINYGLMLAV), 201-221 (VGAVLVIALMITPPAAALLLT), 224-244 (LLLMLVLASLLASCASISGLF), and 251-271 (GSIAGAMATMAGVLFALVYLF).

This sequence belongs to the ABC-3 integral membrane protein family.

Its subcellular location is the cell membrane. Part of an ATP-driven transport system TroABCD for zinc. This is Zinc transport system membrane protein TroD (troD) from Treponema pallidum (strain Nichols).